Reading from the N-terminus, the 101-residue chain is uncharacterized protein (101 aa).

Residues 1 to 21 (MKLSTCCAALLLALASPAVLA) form the signal peptide. A compositionally biased stretch (polar residues) spans 79–94 (RTTSGNVSAPAQSSQD). Residues 79 to 101 (RTTSGNVSAPAQSSQDGAPAEPQ) form a disordered region.

This is an uncharacterized protein from Escherichia coli (strain K12).